Reading from the N-terminus, the 310-residue chain is Acetaldehyde dehydrogenase 1 (310 aa).

12 to 15 serves as a coordination point for NAD(+); sequence SGNI. Cys-127 acts as the Acyl-thioester intermediate in catalysis. Residues 163 to 171 and Asn-282 each bind NAD(+); that span reads SAGPGTRAN.

The protein belongs to the acetaldehyde dehydrogenase family.

It catalyses the reaction acetaldehyde + NAD(+) + CoA = acetyl-CoA + NADH + H(+). The protein is Acetaldehyde dehydrogenase 1 of Mycobacterium sp. (strain KMS).